A 417-amino-acid polypeptide reads, in one-letter code: Histidine--tRNA ligase (417 aa).

The protein belongs to the class-II aminoacyl-tRNA synthetase family. In terms of assembly, homodimer.

The protein localises to the cytoplasm. The enzyme catalyses tRNA(His) + L-histidine + ATP = L-histidyl-tRNA(His) + AMP + diphosphate + H(+). The sequence is that of Histidine--tRNA ligase from Caldanaerobacter subterraneus subsp. tengcongensis (strain DSM 15242 / JCM 11007 / NBRC 100824 / MB4) (Thermoanaerobacter tengcongensis).